The primary structure comprises 418 residues: Serine hydroxymethyltransferase (418 aa).

(6S)-5,6,7,8-tetrahydrofolate contacts are provided by residues Leu-121 and 125-127 (GHL). Position 230 is an N6-(pyridoxal phosphate)lysine (Lys-230). 356 to 358 (SPF) lines the (6S)-5,6,7,8-tetrahydrofolate pocket.

This sequence belongs to the SHMT family. As to quaternary structure, homodimer. Pyridoxal 5'-phosphate serves as cofactor.

The protein localises to the cytoplasm. The enzyme catalyses (6R)-5,10-methylene-5,6,7,8-tetrahydrofolate + glycine + H2O = (6S)-5,6,7,8-tetrahydrofolate + L-serine. The protein operates within one-carbon metabolism; tetrahydrofolate interconversion. It functions in the pathway amino-acid biosynthesis; glycine biosynthesis; glycine from L-serine: step 1/1. Catalyzes the reversible interconversion of serine and glycine with tetrahydrofolate (THF) serving as the one-carbon carrier. This reaction serves as the major source of one-carbon groups required for the biosynthesis of purines, thymidylate, methionine, and other important biomolecules. Also exhibits THF-independent aldolase activity toward beta-hydroxyamino acids, producing glycine and aldehydes, via a retro-aldol mechanism. The chain is Serine hydroxymethyltransferase from Shewanella pealeana (strain ATCC 700345 / ANG-SQ1).